The primary structure comprises 135 residues: Large ribosomal subunit protein uL16c (135 aa).

It belongs to the universal ribosomal protein uL16 family. Part of the 50S ribosomal subunit.

The protein resides in the plastid. Its subcellular location is the chloroplast. The protein is Large ribosomal subunit protein uL16c of Acorus calamus var. americanus (American sweet flag).